A 95-amino-acid polypeptide reads, in one-letter code: Basic phospholipase A2 (95 aa).

N6-palmitoyl lysine attachment occurs at residues Lys-7 and Lys-10. Residues Tyr-23, Gly-25, and Gly-27 each coordinate Ca(2+). Intrachain disulfides connect Cys-24–Cys-40, Cys-39–Cys-77, Cys-46–Cys-70, Cys-53–Cys-63, and Cys-57–Cys-68. Residue His-43 is part of the active site. Residue Asp-44 participates in Ca(2+) binding. Asp-71 is an active-site residue.

Monomer. Requires Ca(2+) as cofactor. As to expression, expressed by the venom gland.

The protein resides in the secreted. The enzyme catalyses a 1,2-diacyl-sn-glycero-3-phosphocholine + H2O = a 1-acyl-sn-glycero-3-phosphocholine + a fatty acid + H(+). Its function is as follows. PLA2 catalyzes the calcium-dependent hydrolysis of the 2-acyl groups in 3-sn-phosphoglycerides. Induces local and systemic myotoxicity in an intramuscular mouse model. Induces local edema in a mouse footpad assay. Does not exhibit any anticoagulant effects. Does not mediate an antibacterial effect against Gram-negative and Gram-positive bacteria. This chain is Basic phospholipase A2, found in Agkistrodon piscivorus leucostoma (Western cottonmouth).